The chain runs to 485 residues: Glutamate--tRNA ligase (485 aa).

The 'HIGH' region signature appears at 11-21; the sequence is PSPTGHLHIGG. The 'KMSKS' region signature appears at 252–256; that stretch reads KMSKR. Position 255 (Lys-255) interacts with ATP.

Belongs to the class-I aminoacyl-tRNA synthetase family. Glutamate--tRNA ligase type 1 subfamily. Monomer.

The protein resides in the cytoplasm. The enzyme catalyses tRNA(Glu) + L-glutamate + ATP = L-glutamyl-tRNA(Glu) + AMP + diphosphate. Functionally, catalyzes the attachment of glutamate to tRNA(Glu) in a two-step reaction: glutamate is first activated by ATP to form Glu-AMP and then transferred to the acceptor end of tRNA(Glu). The chain is Glutamate--tRNA ligase from Halalkalibacterium halodurans (strain ATCC BAA-125 / DSM 18197 / FERM 7344 / JCM 9153 / C-125) (Bacillus halodurans).